Here is a 187-residue protein sequence, read N- to C-terminus: Protein GrpE (187 aa).

Residues 1–26 form a disordered region; that stretch reads MNDLKNAENGPDEADTPQGAPSQEPD.

Belongs to the GrpE family. Homodimer.

It localises to the cytoplasm. Its function is as follows. Participates actively in the response to hyperosmotic and heat shock by preventing the aggregation of stress-denatured proteins, in association with DnaK and GrpE. It is the nucleotide exchange factor for DnaK and may function as a thermosensor. Unfolded proteins bind initially to DnaJ; upon interaction with the DnaJ-bound protein, DnaK hydrolyzes its bound ATP, resulting in the formation of a stable complex. GrpE releases ADP from DnaK; ATP binding to DnaK triggers the release of the substrate protein, thus completing the reaction cycle. Several rounds of ATP-dependent interactions between DnaJ, DnaK and GrpE are required for fully efficient folding. The sequence is that of Protein GrpE from Methylocella silvestris (strain DSM 15510 / CIP 108128 / LMG 27833 / NCIMB 13906 / BL2).